The chain runs to 71 residues: Antitoxin ParD2 (71 aa).

In terms of biological role, antitoxin component of a type II toxin-antitoxin (TA) system. In Mycobacterium tuberculosis (strain CDC 1551 / Oshkosh), this protein is Antitoxin ParD2 (parD2).